The primary structure comprises 65 residues: Large ribosomal subunit protein bL35 (65 aa).

A compositionally biased stretch (basic residues) spans 1–16 (MPKQKTHRASAKRFKR). The disordered stretch occupies residues 1 to 20 (MPKQKTHRASAKRFKRTGSG).

The protein belongs to the bacterial ribosomal protein bL35 family.

The sequence is that of Large ribosomal subunit protein bL35 from Streptococcus pyogenes serotype M1.